A 163-amino-acid chain; its full sequence is Putative NOL1/NOP2/Sun domain family member 5B (163 aa).

Cysteine 93 serves as the catalytic Nucleophile.

The protein belongs to the class I-like SAM-binding methyltransferase superfamily. RsmB/NOP family. In terms of tissue distribution, ubiquitous.

The sequence is that of Putative NOL1/NOP2/Sun domain family member 5B (NSUN5P1) from Homo sapiens (Human).